The following is a 253-amino-acid chain: 5-oxoprolinase subunit A (253 aa).

The protein belongs to the LamB/PxpA family. Forms a complex composed of PxpA, PxpB and PxpC.

It carries out the reaction 5-oxo-L-proline + ATP + 2 H2O = L-glutamate + ADP + phosphate + H(+). Catalyzes the cleavage of 5-oxoproline to form L-glutamate coupled to the hydrolysis of ATP to ADP and inorganic phosphate. This is 5-oxoprolinase subunit A from Ruegeria pomeroyi (strain ATCC 700808 / DSM 15171 / DSS-3) (Silicibacter pomeroyi).